The chain runs to 370 residues: Glutamine synthetase (370 aa).

Ala2 is subject to N-acetylalanine. At Ser5 the chain carries Phosphoserine. Residues 24–103 (IIAEYVWIDG…VLAACYNNDG (80 aa)) form the GS beta-grasp domain. The 261-residue stretch at 110-370 (HRHEAAKLFA…MTKEFERESS (261 aa)) folds into the GS catalytic domain. Residues Lys283, Lys324, and Lys363 each participate in a glycyl lysine isopeptide (Lys-Gly) (interchain with G-Cter in ubiquitin) cross-link.

It belongs to the glutamine synthetase family. In terms of assembly, homooctamer.

The protein resides in the cytoplasm. It carries out the reaction L-glutamate + NH4(+) + ATP = L-glutamine + ADP + phosphate + H(+). The chain is Glutamine synthetase (GLN1) from Saccharomyces cerevisiae (strain ATCC 204508 / S288c) (Baker's yeast).